The sequence spans 197 residues: Ribosome maturation factor RimP (197 aa).

The protein belongs to the RimP family.

The protein resides in the cytoplasm. In terms of biological role, required for maturation of 30S ribosomal subunits. In Acidovorax sp. (strain JS42), this protein is Ribosome maturation factor RimP.